Reading from the N-terminus, the 444-residue chain is Argininosuccinate synthase (444 aa).

Residues 17 to 25 and alanine 43 each bind ATP; that span reads AFSGGLDTS. An L-citrulline-binding site is contributed by tyrosine 99. ATP contacts are provided by glycine 129 and threonine 131. Positions 131, 135, and 136 each coordinate L-aspartate. Residue asparagine 135 coordinates L-citrulline. Aspartate 136 contacts ATP. Arginine 139 and serine 192 together coordinate L-citrulline. Position 194 (aspartate 194) interacts with ATP. Residues threonine 201, glutamate 203, and glutamate 280 each contribute to the L-citrulline site.

This sequence belongs to the argininosuccinate synthase family. Type 2 subfamily. Homotetramer.

The protein localises to the cytoplasm. The catalysed reaction is L-citrulline + L-aspartate + ATP = 2-(N(omega)-L-arginino)succinate + AMP + diphosphate + H(+). It functions in the pathway amino-acid biosynthesis; L-arginine biosynthesis; L-arginine from L-ornithine and carbamoyl phosphate: step 2/3. The chain is Argininosuccinate synthase from Paraburkholderia phymatum (strain DSM 17167 / CIP 108236 / LMG 21445 / STM815) (Burkholderia phymatum).